Reading from the N-terminus, the 475-residue chain is ATP synthase subunit beta (475 aa).

Glycine 155–threonine 162 is a binding site for ATP.

The protein belongs to the ATPase alpha/beta chains family. As to quaternary structure, F-type ATPases have 2 components, CF(1) - the catalytic core - and CF(0) - the membrane proton channel. CF(1) has five subunits: alpha(3), beta(3), gamma(1), delta(1), epsilon(1). CF(0) has three main subunits: a(1), b(2) and c(9-12). The alpha and beta chains form an alternating ring which encloses part of the gamma chain. CF(1) is attached to CF(0) by a central stalk formed by the gamma and epsilon chains, while a peripheral stalk is formed by the delta and b chains.

The protein resides in the cell inner membrane. It catalyses the reaction ATP + H2O + 4 H(+)(in) = ADP + phosphate + 5 H(+)(out). Its function is as follows. Produces ATP from ADP in the presence of a proton gradient across the membrane. The catalytic sites are hosted primarily by the beta subunits. In Rhizobium etli (strain ATCC 51251 / DSM 11541 / JCM 21823 / NBRC 15573 / CFN 42), this protein is ATP synthase subunit beta.